We begin with the raw amino-acid sequence, 89 residues long: Small ribosomal subunit protein uS15 (89 aa).

Belongs to the universal ribosomal protein uS15 family. Part of the 30S ribosomal subunit. Forms a bridge to the 50S subunit in the 70S ribosome, contacting the 23S rRNA.

In terms of biological role, one of the primary rRNA binding proteins, it binds directly to 16S rRNA where it helps nucleate assembly of the platform of the 30S subunit by binding and bridging several RNA helices of the 16S rRNA. Functionally, forms an intersubunit bridge (bridge B4) with the 23S rRNA of the 50S subunit in the ribosome. This is Small ribosomal subunit protein uS15 from Methylorubrum extorquens (strain CM4 / NCIMB 13688) (Methylobacterium extorquens).